A 400-amino-acid chain; its full sequence is MSKNRRLFTSESVTEGHPDKICDQISDSILDEILKKDPNARVACETSVTTGLVLVSGEITTSTYVDIPKTVRETIKEIGYTRAKYGFDAETCAVLTSIDEQSPDIAMGVDQALEAREGAMSDAEIEAIGAGDQGLMFGFACNETKELMPLPISLAHKLSRRLTEVRKEEILPYLRPDGKTQVTVEYDENNKPIRIDTIVISTQHHPEISLEQIQRNLKEHVINPVVPKELIDENTKYFINPTGRFVIGGPQGDAGLTGRKIIVDTYGGYARHGGGAFSGKDATKVDRSAAYAARYVAKNIVAAGLADSCEVQLAYAIGVAQPVSISIDTFGTGKASEETLIEVVRKNFDLRPAGIIKMLDLRRPIYKQTAAYGHFGRLDLDLPWERTDKADQLKKDALGE.

Position 17 (His-17) interacts with ATP. Asp-19 is a binding site for Mg(2+). Residue Glu-45 participates in K(+) binding. L-methionine contacts are provided by Glu-58 and Gln-101. Residues 101–111 (QSPDIAMGVDQ) are flexible loop. Residues 177-179 (DGK), 244-245 (RF), Asp-253, 259-260 (RK), Ala-276, and Lys-280 contribute to the ATP site. Asp-253 serves as a coordination point for L-methionine. Residue Lys-284 participates in L-methionine binding.

This sequence belongs to the AdoMet synthase family. In terms of assembly, homotetramer; dimer of dimers. The cofactor is Mg(2+). It depends on K(+) as a cofactor.

The protein localises to the cytoplasm. The catalysed reaction is L-methionine + ATP + H2O = S-adenosyl-L-methionine + phosphate + diphosphate. The protein operates within amino-acid biosynthesis; S-adenosyl-L-methionine biosynthesis; S-adenosyl-L-methionine from L-methionine: step 1/1. Its function is as follows. Catalyzes the formation of S-adenosylmethionine (AdoMet) from methionine and ATP. The overall synthetic reaction is composed of two sequential steps, AdoMet formation and the subsequent tripolyphosphate hydrolysis which occurs prior to release of AdoMet from the enzyme. The polypeptide is S-adenosylmethionine synthase (Bacillus licheniformis (strain ATCC 14580 / DSM 13 / JCM 2505 / CCUG 7422 / NBRC 12200 / NCIMB 9375 / NCTC 10341 / NRRL NRS-1264 / Gibson 46)).